We begin with the raw amino-acid sequence, 62 residues long: UPF0434 protein BP2767 (62 aa).

This sequence belongs to the UPF0434 family.

This Bordetella pertussis (strain Tohama I / ATCC BAA-589 / NCTC 13251) protein is UPF0434 protein BP2767.